Consider the following 339-residue polypeptide: Uroporphyrinogen decarboxylase (339 aa).

Residues 23–27, D72, Y147, T202, and H315 contribute to the substrate site; that span reads RQAGR.

Belongs to the uroporphyrinogen decarboxylase family. Homodimer.

It is found in the cytoplasm. The catalysed reaction is uroporphyrinogen III + 4 H(+) = coproporphyrinogen III + 4 CO2. The protein operates within porphyrin-containing compound metabolism; protoporphyrin-IX biosynthesis; coproporphyrinogen-III from 5-aminolevulinate: step 4/4. Its function is as follows. Catalyzes the decarboxylation of four acetate groups of uroporphyrinogen-III to yield coproporphyrinogen-III. This is Uroporphyrinogen decarboxylase from Citrifermentans bemidjiense (strain ATCC BAA-1014 / DSM 16622 / JCM 12645 / Bem) (Geobacter bemidjiensis).